We begin with the raw amino-acid sequence, 822 residues long: DNA-directed RNA polymerase subunit beta N-terminal section (822 aa).

Residues 376 to 408 form a disordered region; that stretch reads ELTEGNPSSKSQTKNKTSASKKSKTLNVANTKG. Residues 383-393 are compositionally biased toward low complexity; it reads SSKSQTKNKTS.

This sequence belongs to the RNA polymerase beta chain family. As to quaternary structure, in plastids the minimal PEP RNA polymerase catalytic core is composed of four subunits: alpha, beta, beta', and beta''. When a (nuclear-encoded) sigma factor is associated with the core the holoenzyme is formed, which can initiate transcription.

It localises to the plastid. The protein resides in the chloroplast. It catalyses the reaction RNA(n) + a ribonucleoside 5'-triphosphate = RNA(n+1) + diphosphate. Its function is as follows. DNA-dependent RNA polymerase catalyzes the transcription of DNA into RNA using the four ribonucleoside triphosphates as substrates. The chain is DNA-directed RNA polymerase subunit beta N-terminal section (rpoB1) from Chlamydomonas reinhardtii (Chlamydomonas smithii).